Here is a 231-residue protein sequence, read N- to C-terminus: Orotidine 5'-phosphate decarboxylase (231 aa).

Substrate contacts are provided by residues Asp-11, Lys-33, 60-69, Thr-120, Arg-181, Gln-190, Gly-210, and Arg-211; that span reads DLKFHDIPNT. Residue Lys-62 is the Proton donor of the active site.

The protein belongs to the OMP decarboxylase family. Type 1 subfamily. In terms of assembly, homodimer.

It carries out the reaction orotidine 5'-phosphate + H(+) = UMP + CO2. Its pathway is pyrimidine metabolism; UMP biosynthesis via de novo pathway; UMP from orotate: step 2/2. Catalyzes the decarboxylation of orotidine 5'-monophosphate (OMP) to uridine 5'-monophosphate (UMP). The polypeptide is Orotidine 5'-phosphate decarboxylase (Photobacterium profundum (strain SS9)).